Consider the following 626-residue polypeptide: Glutamate--cysteine ligase (626 aa).

Belongs to the glutamate--cysteine ligase type 3 family. As to quaternary structure, monomer.

It catalyses the reaction L-cysteine + L-glutamate + ATP = gamma-L-glutamyl-L-cysteine + ADP + phosphate + H(+). Its pathway is sulfur metabolism; glutathione biosynthesis; glutathione from L-cysteine and L-glutamate: step 1/2. An essential enzyme in glutathione (L-gamma-glutamyl-L-cysteinylglycine, GSH) biosynthesis, GSH is essential for growth and differentiation to prespore stage. Catalyzes the condensation of glutamate to cysteine. This is Glutamate--cysteine ligase (gcsA) from Dictyostelium discoideum (Social amoeba).